A 763-amino-acid polypeptide reads, in one-letter code: Protein translocase subunit SecA 2 (763 aa).

ATP is bound by residues Gln83, 101–105 (GEGKT), and Asp490.

It belongs to the SecA family. In terms of assembly, monomer and homodimer. Part of the essential Sec protein translocation apparatus which comprises SecA, SecYEG and auxiliary proteins SecDF. Other proteins may also be involved.

Its subcellular location is the cell membrane. The protein resides in the cytoplasm. It carries out the reaction ATP + H2O + cellular proteinSide 1 = ADP + phosphate + cellular proteinSide 2.. In terms of biological role, part of the Sec protein translocase complex. Interacts with the SecYEG preprotein conducting channel. Has a central role in coupling the hydrolysis of ATP to the transfer of proteins into and across the cell membrane, serving as an ATP-driven molecular motor driving the stepwise translocation of polypeptide chains across the membrane. The sequence is that of Protein translocase subunit SecA 2 from Corynebacterium glutamicum (strain ATCC 13032 / DSM 20300 / JCM 1318 / BCRC 11384 / CCUG 27702 / LMG 3730 / NBRC 12168 / NCIMB 10025 / NRRL B-2784 / 534).